A 206-amino-acid chain; its full sequence is Thiamine-phosphate synthase (206 aa).

4-amino-2-methyl-5-(diphosphooxymethyl)pyrimidine contacts are provided by residues 38–42 (QLREK) and Asn-70. The Mg(2+) site is built by Asp-71 and Asp-90. Thr-109 is a 4-amino-2-methyl-5-(diphosphooxymethyl)pyrimidine binding site. Residue 135 to 137 (TST) participates in 2-[(2R,5Z)-2-carboxy-4-methylthiazol-5(2H)-ylidene]ethyl phosphate binding. Residue Lys-138 participates in 4-amino-2-methyl-5-(diphosphooxymethyl)pyrimidine binding. Residues Gly-165 and 185–186 (VS) contribute to the 2-[(2R,5Z)-2-carboxy-4-methylthiazol-5(2H)-ylidene]ethyl phosphate site.

Belongs to the thiamine-phosphate synthase family. It depends on Mg(2+) as a cofactor.

The catalysed reaction is 2-[(2R,5Z)-2-carboxy-4-methylthiazol-5(2H)-ylidene]ethyl phosphate + 4-amino-2-methyl-5-(diphosphooxymethyl)pyrimidine + 2 H(+) = thiamine phosphate + CO2 + diphosphate. The enzyme catalyses 2-(2-carboxy-4-methylthiazol-5-yl)ethyl phosphate + 4-amino-2-methyl-5-(diphosphooxymethyl)pyrimidine + 2 H(+) = thiamine phosphate + CO2 + diphosphate. It catalyses the reaction 4-methyl-5-(2-phosphooxyethyl)-thiazole + 4-amino-2-methyl-5-(diphosphooxymethyl)pyrimidine + H(+) = thiamine phosphate + diphosphate. The protein operates within cofactor biosynthesis; thiamine diphosphate biosynthesis; thiamine phosphate from 4-amino-2-methyl-5-diphosphomethylpyrimidine and 4-methyl-5-(2-phosphoethyl)-thiazole: step 1/1. In terms of biological role, condenses 4-methyl-5-(beta-hydroxyethyl)thiazole monophosphate (THZ-P) and 2-methyl-4-amino-5-hydroxymethyl pyrimidine pyrophosphate (HMP-PP) to form thiamine monophosphate (TMP). The protein is Thiamine-phosphate synthase of Fusobacterium nucleatum subsp. nucleatum (strain ATCC 25586 / DSM 15643 / BCRC 10681 / CIP 101130 / JCM 8532 / KCTC 2640 / LMG 13131 / VPI 4355).